Here is an 876-residue protein sequence, read N- to C-terminus: GRB2-associated and regulator of MAPK protein (876 aa).

A CABIT region spans residues K12–E320. Phosphotyrosine is present on Y105. A disordered region spans residues G427–K448. Y453 carries the post-translational modification Phosphotyrosine. 2 disordered regions span residues E460–G501 and L530–S572. A necessary for interaction with GRB2 region spans residues A498–P550. The segment covering Q560 to S572 has biased composition (polar residues). A phosphoserine mark is found at S609 and S613. 2 stretches are compositionally biased toward polar residues: residues S630–S639 and R647–P657. 2 disordered regions span residues S630 to C664 and C722 to S759. In terms of domain architecture, SAM spans L811 to I876.

It belongs to the GAREM family. As to quaternary structure, interacts with EGFR. Interacts (via proline-rich domain and phosphorylated at Tyr-105 and Tyr-453) with GRB2 (via SH3 domains); the interaction occurs upon EGF stimulation. Interacts (phosphorylated at Tyr-453) with PTPN11; the interaction increases MAPK/ERK activity and does not affect the GRB2/SOS complex formation. In terms of processing, on EGF stimulation, phosphorylated on Tyr-105 and Tyr-453.

Its function is as follows. Acts as an adapter protein that plays a role in intracellular signaling cascades triggered either by the cell surface activated epidermal growth factor receptor and/or cytoplasmic protein tyrosine kinases. Promotes activation of the MAPK/ERK signaling pathway. Plays a role in the regulation of cell proliferation. The polypeptide is GRB2-associated and regulator of MAPK protein (Garem1) (Mus musculus (Mouse)).